The chain runs to 286 residues: S-methyl-5'-thioadenosine phosphorylase (286 aa).

Phosphate-binding positions include S11, 53 to 54 (RH), and 86 to 87 (SA). M185 is a substrate binding site. Residue T186 coordinates phosphate. 209–211 (DYD) serves as a coordination point for substrate.

The protein belongs to the PNP/MTAP phosphorylase family. MTAP subfamily. As to quaternary structure, homohexamer. Dimer of a homotrimer.

The catalysed reaction is S-methyl-5'-thioadenosine + phosphate = 5-(methylsulfanyl)-alpha-D-ribose 1-phosphate + adenine. The protein operates within amino-acid biosynthesis; L-methionine biosynthesis via salvage pathway; S-methyl-5-thio-alpha-D-ribose 1-phosphate from S-methyl-5'-thioadenosine (phosphorylase route): step 1/1. Catalyzes the reversible phosphorylation of S-methyl-5'-thioadenosine (MTA) to adenine and 5-methylthioribose-1-phosphate. Involved in the breakdown of MTA, a major by-product of polyamine biosynthesis. Responsible for the first step in the methionine salvage pathway after MTA has been generated from S-adenosylmethionine. Has broad substrate specificity with 6-aminopurine nucleosides as preferred substrates. In Geobacter sulfurreducens (strain ATCC 51573 / DSM 12127 / PCA), this protein is S-methyl-5'-thioadenosine phosphorylase.